Here is a 289-residue protein sequence, read N- to C-terminus: uncharacterized protein (289 aa).

Residues 25 to 66 are disordered; sequence GGSGDSQSAHTPSTSIHTQNNSTPNKNTSTPPVNVSNANNLE. Residues 33–43 show a composition bias toward polar residues; that stretch reads AHTPSTSIHTQ. Positions 44-59 are enriched in low complexity; it reads NNSTPNKNTSTPPVNV.

This is an uncharacterized protein from Haemophilus influenzae (strain ATCC 51907 / DSM 11121 / KW20 / Rd).